The sequence spans 187 residues: Elongation factor P (187 aa).

It belongs to the elongation factor P family.

It localises to the cytoplasm. It functions in the pathway protein biosynthesis; polypeptide chain elongation. Its function is as follows. Involved in peptide bond synthesis. Stimulates efficient translation and peptide-bond synthesis on native or reconstituted 70S ribosomes in vitro. Probably functions indirectly by altering the affinity of the ribosome for aminoacyl-tRNA, thus increasing their reactivity as acceptors for peptidyl transferase. This Nocardioides sp. (strain ATCC BAA-499 / JS614) protein is Elongation factor P.